A 347-amino-acid polypeptide reads, in one-letter code: 4-hydroxy-2-oxovalerate aldolase (347 aa).

The 251-residue stretch at 2 to 252 folds into the Pyruvate carboxyltransferase domain; the sequence is ILISDATLRD…DTRTTFERVM (251 aa). 10-11 is a binding site for substrate; the sequence is RD. Residue D11 coordinates Mn(2+). The active-site Proton acceptor is the H14. Substrate-binding residues include S164 and H191. Residues H191 and H193 each coordinate Mn(2+).

It belongs to the 4-hydroxy-2-oxovalerate aldolase family.

The enzyme catalyses (S)-4-hydroxy-2-oxopentanoate = acetaldehyde + pyruvate. The polypeptide is 4-hydroxy-2-oxovalerate aldolase (Burkholderia pseudomallei (strain 1106a)).